Here is a 224-residue protein sequence, read N- to C-terminus: MADS-box transcription factor 16 (224 aa).

Residues 1–61 (MGRGKIEIKR…GKYHEFCSPS (61 aa)) enclose the MADS-box domain. In terms of domain architecture, K-box spans 84–174 (YENMQRTLSH…QQELGLREEP (91 aa)).

In terms of assembly, may interact with the K-box of MADS4, MADS6 and MADS8. May form a heterodimer with MADS4. In terms of tissue distribution, expressed in lodicules, stamens and carpels.

It localises to the nucleus. Probable transcription factor involved in the development of floral organs. Required for normal development of lodicules and stamens (whorls 2 and 3). May function as a heterodimer with MADS4. The chain is MADS-box transcription factor 16 (MADS16) from Oryza sativa subsp. japonica (Rice).